The chain runs to 783 residues: Protein SCARECROW (783 aa).

The tract at residues 298 to 387 (QPQSQDAITH…QSPPASENTA (90 aa)) is disordered. 2 stretches are compositionally biased toward low complexity: residues 342–353 (PSSLPFVPVPSS) and 372–384 (ESQS…PASE). The stretch at 387-418 (AAAALIRTESIMRREKEELEQQKKDEEGLHLL) forms a coiled coil. A GRAS domain is found at 408–777 (QKKDEEGLHL…LCLLTASAWR (370 aa)). The segment at 415 to 478 (LHLLTLLLQC…LVNSCLGIYA (64 aa)) is leucine repeat I (LRI). The LxCxE motif signature appears at 422-426 (LQCAE). The tract at residues 497–562 (FQVFNGISPF…GGPPLVRLTG (66 aa)) is VHIID. Positions 528-532 (VHIID) match the VHIID motif. A leucine repeat II (LRII) region spans residues 572 to 604 (ATGKRLSDFAQKLGLPFEFFPVADKVGNLDPQR). The tract at residues 613–700 (VAVHWLQHSL…QQLLSREIRN (88 aa)) is PFYRE. The SAW stretch occupies residues 703 to 777 (AVGGPSRSGE…LCLLTASAWR (75 aa)).

The protein belongs to the GRAS family.

The protein localises to the nucleus. Its function is as follows. Putative transcription factor involved in asymmetric cell division. Required for differentiation of endodermis and graviresponses. The protein is Protein SCARECROW (SCR) of Ipomoea nil (Japanese morning glory).